A 115-amino-acid chain; its full sequence is Mediator of RNA polymerase II transcription subunit 9 (115 aa).

Positions 1–31 (MATGGTVRPAEEPEEEEEEEDEAVEEEEEED) are disordered. The span at 12–31 (EPEEEEEEEDEAVEEEEEED) shows a compositional bias: acidic residues. Positions 31 to 107 (DYTFLPLVHD…SELLQKYKSL (77 aa)) form a coiled coil.

The protein belongs to the Mediator complex subunit 9 family. In terms of assembly, component of the Mediator complex.

The protein localises to the nucleus. Its function is as follows. Component of the Mediator complex, a coactivator involved in the regulated transcription of nearly all RNA polymerase II-dependent genes. Mediator functions as a bridge to convey information from gene-specific regulatory proteins to the basal RNA polymerase II transcription machinery. Mediator is recruited to promoters by direct interactions with regulatory proteins and serves as a scaffold for the assembly of a functional preinitiation complex with RNA polymerase II and the general transcription factors. This chain is Mediator of RNA polymerase II transcription subunit 9 (med9), found in Xenopus laevis (African clawed frog).